Reading from the N-terminus, the 163-residue chain is Nucleotide-binding protein Cj0374 (163 aa).

The protein belongs to the YajQ family.

Functionally, nucleotide-binding protein. The chain is Nucleotide-binding protein Cj0374 from Campylobacter jejuni subsp. jejuni serotype O:2 (strain ATCC 700819 / NCTC 11168).